A 374-amino-acid polypeptide reads, in one-letter code: Pectinesterase (374 aa).

The signal sequence occupies residues 1–31 (MVKLLNSTRELSINALSMLNSFGDMVAQATG). N-linked (GlcNAc...) asparagine glycans are attached at residues asparagine 58 and asparagine 124. Threonine 133 and glutamine 163 together coordinate substrate. Catalysis depends on aspartate 186, which acts as the Proton donor. A disulfide bridge connects residues cysteine 200 and cysteine 220. The active-site Nucleophile is the aspartate 207. A glycan (N-linked (GlcNAc...) asparagine) is linked at asparagine 230. 2 residues coordinate substrate: arginine 275 and tryptophan 277. Asparagine 303 is a glycosylation site (N-linked (GlcNAc...) asparagine).

Belongs to the pectinesterase family. Pollen, and at much lower levels in pistils and petals.

Its subcellular location is the secreted. It localises to the cell wall. The enzyme catalyses [(1-&gt;4)-alpha-D-galacturonosyl methyl ester](n) + n H2O = [(1-&gt;4)-alpha-D-galacturonosyl](n) + n methanol + n H(+). It functions in the pathway glycan metabolism; pectin degradation; 2-dehydro-3-deoxy-D-gluconate from pectin: step 1/5. In terms of biological role, may play a role in pollen germination and/or tube growth. The sequence is that of Pectinesterase (PPE1) from Petunia integrifolia (Violet-flowered petunia).